Here is a 229-residue protein sequence, read N- to C-terminus: Large ribosomal subunit protein uL1 (229 aa).

The protein belongs to the universal ribosomal protein uL1 family. Part of the 50S ribosomal subunit.

Binds directly to 23S rRNA. The L1 stalk is quite mobile in the ribosome, and is involved in E site tRNA release. Its function is as follows. Protein L1 is also a translational repressor protein, it controls the translation of the L11 operon by binding to its mRNA. The sequence is that of Large ribosomal subunit protein uL1 from Latilactobacillus sakei subsp. sakei (strain 23K) (Lactobacillus sakei subsp. sakei).